Reading from the N-terminus, the 96-residue chain is UPF0213 protein Lreu_0682 (96 aa).

The GIY-YIG domain occupies 4–81 (EKYYIYVLYC…KHQTRRQKEK (78 aa)).

Belongs to the UPF0213 family.

The chain is UPF0213 protein Lreu_0682 from Limosilactobacillus reuteri (strain DSM 20016) (Lactobacillus reuteri).